Here is a 547-residue protein sequence, read N- to C-terminus: Glucose-6-phosphate isomerase 2 (547 aa).

The active-site Proton donor is the glutamate 351. Active-site residues include histidine 382 and lysine 508.

This sequence belongs to the GPI family.

It is found in the cytoplasm. It catalyses the reaction alpha-D-glucose 6-phosphate = beta-D-fructose 6-phosphate. It participates in carbohydrate biosynthesis; gluconeogenesis. It functions in the pathway carbohydrate degradation; glycolysis; D-glyceraldehyde 3-phosphate and glycerone phosphate from D-glucose: step 2/4. Its function is as follows. Catalyzes the reversible isomerization of glucose-6-phosphate to fructose-6-phosphate. The sequence is that of Glucose-6-phosphate isomerase 2 from Neisseria meningitidis serogroup A / serotype 4A (strain DSM 15465 / Z2491).